We begin with the raw amino-acid sequence, 259 residues long: Flap endonuclease Xni (259 aa).

Aspartate 109 is a Mg(2+) binding site. The 91-residue stretch at 165 to 255 (VKPQQLSDYW…FNLQDLRFTA (91 aa)) folds into the 5'-3' exonuclease domain. 3 residues coordinate K(+): leucine 176, isoleucine 187, and isoleucine 190. The tract at residues 189 to 194 (GIGPKA) is interaction with DNA.

It belongs to the Xni family. The cofactor is Mg(2+). It depends on K(+) as a cofactor.

Functionally, has flap endonuclease activity. During DNA replication, flap endonucleases cleave the 5'-overhanging flap structure that is generated by displacement synthesis when DNA polymerase encounters the 5'-end of a downstream Okazaki fragment. This is Flap endonuclease Xni from Vibrio vulnificus (strain CMCP6).